The primary structure comprises 111 residues: Nucleoid-associated protein Teth514_0034 (111 aa).

The protein belongs to the YbaB/EbfC family. As to quaternary structure, homodimer.

It localises to the cytoplasm. The protein resides in the nucleoid. Its function is as follows. Binds to DNA and alters its conformation. May be involved in regulation of gene expression, nucleoid organization and DNA protection. The polypeptide is Nucleoid-associated protein Teth514_0034 (Thermoanaerobacter sp. (strain X514)).